A 1024-amino-acid chain; its full sequence is Eukaryotic translation initiation factor 3 subunit A (1024 aa).

Residues 331–508 enclose the PCI domain; sequence VISSNAPGTG…QAITFQDDVF (178 aa). 2 coiled-coil regions span residues 575–717 and 777–889; these read AAED…REEA and KRRG…RRSR. Composition is skewed to basic and acidic residues over residues 797–866 and 873–886; these read KERR…ERRA and DKQR…EANR. 2 disordered regions span residues 797-973 and 1001-1024; these read KERR…GAYR and AAAA…GRRA. Composition is skewed to low complexity over residues 890 to 906 and 946 to 971; these read AAGT…AADA and KEAA…SSGA.

It belongs to the eIF-3 subunit A family. As to quaternary structure, component of the eukaryotic translation initiation factor 3 (eIF-3) complex.

The protein localises to the cytoplasm. In terms of biological role, RNA-binding component of the eukaryotic translation initiation factor 3 (eIF-3) complex, which is involved in protein synthesis of a specialized repertoire of mRNAs and, together with other initiation factors, stimulates binding of mRNA and methionyl-tRNAi to the 40S ribosome. The eIF-3 complex specifically targets and initiates translation of a subset of mRNAs involved in cell proliferation. The protein is Eukaryotic translation initiation factor 3 subunit A of Mycosarcoma maydis (Corn smut fungus).